We begin with the raw amino-acid sequence, 407 residues long: 4-hydroxy-3-methylbut-2-en-1-yl diphosphate synthase (ferredoxin) (407 aa).

[4Fe-4S] cluster contacts are provided by Cys-312, Cys-315, Cys-346, and Glu-353.

The protein belongs to the IspG family. It depends on [4Fe-4S] cluster as a cofactor.

The catalysed reaction is (2E)-4-hydroxy-3-methylbut-2-enyl diphosphate + 2 oxidized [2Fe-2S]-[ferredoxin] + H2O = 2-C-methyl-D-erythritol 2,4-cyclic diphosphate + 2 reduced [2Fe-2S]-[ferredoxin] + H(+). It participates in isoprenoid biosynthesis; isopentenyl diphosphate biosynthesis via DXP pathway; isopentenyl diphosphate from 1-deoxy-D-xylulose 5-phosphate: step 5/6. Converts 2C-methyl-D-erythritol 2,4-cyclodiphosphate (ME-2,4cPP) into 1-hydroxy-2-methyl-2-(E)-butenyl 4-diphosphate. The sequence is that of 4-hydroxy-3-methylbut-2-en-1-yl diphosphate synthase (ferredoxin) from Synechococcus elongatus (strain ATCC 33912 / PCC 7942 / FACHB-805) (Anacystis nidulans R2).